Reading from the N-terminus, the 410-residue chain is Bifunctional malic/malolactic enzyme (410 aa).

Residue Tyr36 is the Proton donor of the active site. The active-site Proton acceptor is Lys91. The a divalent metal cation site is built by Glu133, Asp134, and Asp159. NADP(+)-binding positions include 192–195 (AGAA), Asn286, and Asn317.

Belongs to the malic enzymes family. Interacts with BrxC. Mg(2+) serves as cofactor. Requires Mn(2+) as cofactor.

The catalysed reaction is (S)-malate + NADP(+) = pyruvate + CO2 + NADPH. The enzyme catalyses oxaloacetate + H(+) = pyruvate + CO2. It carries out the reaction (S)-malate + H(+) = (S)-lactate + CO2. With respect to regulation, NADPH is a strong modulator that switches activity from a pyruvate-producing malic enzyme to a lactate-generating malolactic enzyme. Functionally, bifunctional enzyme with both malic and malolactic enzyme activities. In the absence of NADPH, catalyzes the reversible decarboxylation of malate to pyruvate. Can use NAD and NADP, but with a very strong preference for NADP. In the presence of excess NADPH, catalyzes the non-oxidative decarboxylation of malate to lactate. During growth on glucose, contributes to NADPH balancing via oxidation of the NADPH produced in excess by other enzymatic reactions. Can also catalyze the decarboxylation of oxaloacetate. This Bacillus subtilis (strain 168) protein is Bifunctional malic/malolactic enzyme (ytsJ).